Reading from the N-terminus, the 689-residue chain is Beta-adrenergic receptor kinase 1 (689 aa).

The interval methionine 1–aspartate 190 is N-terminal. In terms of domain architecture, RGS spans threonine 54 to cysteine 175. The Protein kinase domain maps to phenylalanine 191–phenylalanine 453. Residues isoleucine 197 to valine 205 and lysine 220 each bind ATP. Aspartate 317 acts as the Proton acceptor in catalysis. The AGC-kinase C-terminal domain maps to arginine 454–valine 521. Residues aspartate 558–arginine 652 enclose the PH domain. Serine 670 is subject to Phosphoserine.

The protein belongs to the protein kinase superfamily. AGC Ser/Thr protein kinase family. GPRK subfamily. As to quaternary structure, interacts with the heterodimer formed by GNB1 and GNG2. Interacts with GIT1. Interacts with, and phosphorylates chemokine-stimulated CCR5. Interacts with ARRB1. Interacts with LPAR1 and LPAR2. Interacts with RALA in response to LPAR1 activation. ADRBK1 and RALA mutually inhibit each other's binding to LPAR1. Interacts with ADRB2. Expressed at low levels in brain cortex, hippocampus, striatum, hypothalamus, cerebellum and brainstem (at protein level).

Its subcellular location is the cytoplasm. It localises to the cell membrane. The protein resides in the postsynapse. The protein localises to the presynapse. It carries out the reaction [beta-adrenergic receptor] + ATP = [beta-adrenergic receptor]-phosphate + ADP + H(+). Its activity is regulated as follows. In contrast to other AGC family kinases, the catalytic activity is solely regulated by the binding of substrates and ligands, not by phosphorylation of the kinase domain. In terms of biological role, specifically phosphorylates the agonist-occupied form of the beta-adrenergic and closely related receptors, probably inducing a desensitization of them. Key regulator of LPAR1 signaling. Competes with RALA for binding to LPAR1 thus affecting the signaling properties of the receptor. Desensitizes LPAR1 and LPAR2 in a phosphorylation-independent manner. Positively regulates ciliary smoothened (SMO)-dependent Hedgehog (Hh) signaling pathway by facilitating the trafficking of SMO into the cilium and the stimulation of SMO activity. Inhibits relaxation of airway smooth muscle in response to blue light. This chain is Beta-adrenergic receptor kinase 1, found in Rattus norvegicus (Rat).